Reading from the N-terminus, the 215-residue chain is Probable ribosome-binding factor A, chloroplastic (215 aa).

A chloroplast-targeting transit peptide spans 1 to 52 (MPNLLHTNQSHFFFLHHPPIYTVSSKTQAFHFPQSMAPVNLRTNLSVRRTVR). The span at 183-192 (KGSGEGKTEP) shows a compositional bias: basic and acidic residues. Positions 183–210 (KGSGEGKTEPSDSTEDDQDWEVDDPDED) are disordered. The span at 194-210 (DSTEDDQDWEVDDPDED) shows a compositional bias: acidic residues.

It belongs to the RbfA family.

It localises to the plastid. Its subcellular location is the chloroplast. This is Probable ribosome-binding factor A, chloroplastic from Arabidopsis thaliana (Mouse-ear cress).